The following is a 157-amino-acid chain: MRILGIDPGSRKCGYAIISHASNKLSLITAGFINITTTRLQEQILDLIEALDCLLDRYEVNEVAIEDIFFGYNPKSVIKLAQFRGALSLKILERIGNFSEYTPLQVKKALTGNGKAAKEQVAFMVKRLLNITSEIKPLDISDAIAVAITHAQRLKPR.

Active-site residues include Asp7, Glu66, and Asp139. Mg(2+) is bound by residues Asp7, Glu66, and Asp139.

The protein belongs to the RuvC family. Homodimer which binds Holliday junction (HJ) DNA. The HJ becomes 2-fold symmetrical on binding to RuvC with unstacked arms; it has a different conformation from HJ DNA in complex with RuvA. In the full resolvosome a probable DNA-RuvA(4)-RuvB(12)-RuvC(2) complex forms which resolves the HJ. Mg(2+) is required as a cofactor.

Its subcellular location is the cytoplasm. It carries out the reaction Endonucleolytic cleavage at a junction such as a reciprocal single-stranded crossover between two homologous DNA duplexes (Holliday junction).. Functionally, the RuvA-RuvB-RuvC complex processes Holliday junction (HJ) DNA during genetic recombination and DNA repair. Endonuclease that resolves HJ intermediates. Cleaves cruciform DNA by making single-stranded nicks across the HJ at symmetrical positions within the homologous arms, yielding a 5'-phosphate and a 3'-hydroxyl group; requires a central core of homology in the junction. The consensus cleavage sequence is 5'-(A/T)TT(C/G)-3'. Cleavage occurs on the 3'-side of the TT dinucleotide at the point of strand exchange. HJ branch migration catalyzed by RuvA-RuvB allows RuvC to scan DNA until it finds its consensus sequence, where it cleaves and resolves the cruciform DNA. This is Crossover junction endodeoxyribonuclease RuvC from Helicobacter pylori (strain J99 / ATCC 700824) (Campylobacter pylori J99).